Consider the following 149-residue polypeptide: Transcriptional repressor NrdR (149 aa).

A zinc finger spans residues 3-34 (CPFCCAVDTKVIDSRLVGEGSSVRRRRQCVVC). The 91-residue stretch at 49 to 139 (PRVVKSNDVR…VYRSFEDIRE (91 aa)) folds into the ATP-cone domain.

It belongs to the NrdR family. Zn(2+) serves as cofactor.

Its function is as follows. Negatively regulates transcription of bacterial ribonucleotide reductase nrd genes and operons by binding to NrdR-boxes. This Erwinia tasmaniensis (strain DSM 17950 / CFBP 7177 / CIP 109463 / NCPPB 4357 / Et1/99) protein is Transcriptional repressor NrdR.